Reading from the N-terminus, the 524-residue chain is Na(+)/H(+) antiporter NhaB (524 aa).

12 helical membrane-spanning segments follow: residues isoleucine 23–alanine 43, glycine 44–leucine 64, leucine 97–phenylalanine 117, leucine 120–phenylalanine 140, phenylalanine 144–isoleucine 164, leucine 203–proline 223, phenylalanine 236–leucine 256, alanine 304–isoleucine 324, phenylalanine 354–phenylalanine 374, leucine 392–valine 412, alanine 448–isoleucine 468, and valine 476–phenylalanine 496.

Belongs to the NhaB Na(+)/H(+) (TC 2.A.34) antiporter family.

It localises to the cell inner membrane. The catalysed reaction is 2 Na(+)(in) + 3 H(+)(out) = 2 Na(+)(out) + 3 H(+)(in). Functionally, na(+)/H(+) antiporter that extrudes sodium in exchange for external protons. The protein is Na(+)/H(+) antiporter NhaB of Edwardsiella ictaluri (strain 93-146).